The primary structure comprises 218 residues: Protein N-lysine methyltransferase METTL21A (218 aa).

S-adenosyl-L-methionine is bound by residues tryptophan 47, 73 to 75, aspartate 94, tryptophan 125, and alanine 143; that span reads GAG.

It belongs to the methyltransferase superfamily. METTL21 family. In terms of assembly, interacts with heat shock protein 70 family members; at least some of these proteins are methylation substrates.

It is found in the cytoplasm. The catalysed reaction is L-lysyl-[protein] + 3 S-adenosyl-L-methionine = N(6),N(6),N(6)-trimethyl-L-lysyl-[protein] + 3 S-adenosyl-L-homocysteine + 3 H(+). In terms of biological role, protein-lysine methyltransferase that selectively trimethylates residues in heat shock protein 70 (HSP70) family members. Contributes to the in vivo trimethylation of Lys residues in HSPA1 and HSPA8. In vitro methylates 'Lys-561' in HSPA1, 'Lys-564' in HSPA2, 'Lys-585' in HSPA5, 'Lys-563' in HSPA6 and 'Lys-561' in HSPA8. This chain is Protein N-lysine methyltransferase METTL21A (METTL21A), found in Homo sapiens (Human).